Consider the following 129-residue polypeptide: Glycine cleavage system H protein (129 aa).

The region spanning 24 to 106 (LVRIGISAFA…HGEGWLLLVK (83 aa)) is the Lipoyl-binding domain. The residue at position 65 (Lys-65) is an N6-lipoyllysine.

This sequence belongs to the GcvH family. As to quaternary structure, the glycine cleavage system is composed of four proteins: P, T, L and H. The cofactor is (R)-lipoate.

In terms of biological role, the glycine cleavage system catalyzes the degradation of glycine. The H protein shuttles the methylamine group of glycine from the P protein to the T protein. The chain is Glycine cleavage system H protein from Prochlorococcus marinus (strain SARG / CCMP1375 / SS120).